The following is a 732-amino-acid chain: 1,4-alpha-glucan branching enzyme GlgB (732 aa).

Asp-408 acts as the Nucleophile in catalysis. The active-site Proton donor is Glu-461.

Belongs to the glycosyl hydrolase 13 family. GlgB subfamily. In terms of assembly, monomer.

It catalyses the reaction Transfers a segment of a (1-&gt;4)-alpha-D-glucan chain to a primary hydroxy group in a similar glucan chain.. It participates in glycan biosynthesis; glycogen biosynthesis. Its function is as follows. Catalyzes the formation of the alpha-1,6-glucosidic linkages in glycogen by scission of a 1,4-alpha-linked oligosaccharide from growing alpha-1,4-glucan chains and the subsequent attachment of the oligosaccharide to the alpha-1,6 position. The protein is 1,4-alpha-glucan branching enzyme GlgB of Rhodococcus jostii (strain RHA1).